The primary structure comprises 164 residues: Transcription antitermination protein NusB (164 aa).

Belongs to the NusB family.

Involved in transcription antitermination. Required for transcription of ribosomal RNA (rRNA) genes. Binds specifically to the boxA antiterminator sequence of the ribosomal RNA (rrn) operons. In Chlorobaculum parvum (strain DSM 263 / NCIMB 8327) (Chlorobium vibrioforme subsp. thiosulfatophilum), this protein is Transcription antitermination protein NusB.